Consider the following 1295-residue polypeptide: Phosphoribosylformylglycinamidine synthase (1295 aa).

The disordered stretch occupies residues 305 to 327 (WPGAATGSGGEIRDEGATGRGAK). Residues 307–318 (GAATGSGGEIRD) and Ala678 each bind ATP. Positions 718, 722, and 884 each coordinate Mg(2+). An ATP-binding site is contributed by Ser886. The Glutamine amidotransferase type-1 domain occupies 1042–1295 (VAVLREQGVN…IFRNARKQLG (254 aa)). Cys1135 (nucleophile) is an active-site residue. Catalysis depends on residues His1260 and Glu1262.

This sequence in the N-terminal section; belongs to the FGAMS family. Monomer.

Its subcellular location is the cytoplasm. It catalyses the reaction N(2)-formyl-N(1)-(5-phospho-beta-D-ribosyl)glycinamide + L-glutamine + ATP + H2O = 2-formamido-N(1)-(5-O-phospho-beta-D-ribosyl)acetamidine + L-glutamate + ADP + phosphate + H(+). The protein operates within purine metabolism; IMP biosynthesis via de novo pathway; 5-amino-1-(5-phospho-D-ribosyl)imidazole from N(2)-formyl-N(1)-(5-phospho-D-ribosyl)glycinamide: step 1/2. In terms of biological role, phosphoribosylformylglycinamidine synthase involved in the purines biosynthetic pathway. Catalyzes the ATP-dependent conversion of formylglycinamide ribonucleotide (FGAR) and glutamine to yield formylglycinamidine ribonucleotide (FGAM) and glutamate. The sequence is that of Phosphoribosylformylglycinamidine synthase from Shigella sonnei (strain Ss046).